The primary structure comprises 380 residues: Cystathionine gamma-synthase (380 aa).

Position 195 is an N6-(pyridoxal phosphate)lysine (Lys195).

This sequence belongs to the trans-sulfuration enzymes family. As to quaternary structure, homotetramer. Pyridoxal 5'-phosphate is required as a cofactor.

The protein resides in the cytoplasm. The enzyme catalyses O-succinyl-L-homoserine + L-cysteine = L,L-cystathionine + succinate + H(+). In terms of biological role, catalyzes the formation of L-cystathionine from O-succinyl-L-homoserine (OSHS) and L-cysteine, via a gamma-replacement reaction. In the absence of thiol, catalyzes gamma-elimination to form 2-oxobutanoate, succinate and ammonia. This Helicobacter pylori (strain J99 / ATCC 700824) (Campylobacter pylori J99) protein is Cystathionine gamma-synthase (metB).